A 256-amino-acid polypeptide reads, in one-letter code: Hydroxyacylglutathione hydrolase (256 aa).

The Zn(2+) site is built by H57, H59, D61, H62, H115, D134, and H172.

This sequence belongs to the metallo-beta-lactamase superfamily. Glyoxalase II family. Monomer. The cofactor is Zn(2+).

The catalysed reaction is an S-(2-hydroxyacyl)glutathione + H2O = a 2-hydroxy carboxylate + glutathione + H(+). The protein operates within secondary metabolite metabolism; methylglyoxal degradation; (R)-lactate from methylglyoxal: step 2/2. In terms of biological role, thiolesterase that catalyzes the hydrolysis of S-D-lactoyl-glutathione to form glutathione and D-lactic acid. The polypeptide is Hydroxyacylglutathione hydrolase (Rhizobium johnstonii (strain DSM 114642 / LMG 32736 / 3841) (Rhizobium leguminosarum bv. viciae)).